The following is a 58-amino-acid chain: Small integral membrane protein 11 (58 aa).

The chain crosses the membrane as a helical span at residues 10–32 (PLLLYILAAKTLILCLTFAGVKM). Residues 29–58 (GVKMYQRKRLEAKQQKLEAERKKQSEKKDN) are a coiled coil.

As to expression, expressed in heart, spleen, liver, stomach, muscle, lung, testis, skin, PBL and bone marrow.

Its subcellular location is the membrane. The chain is Small integral membrane protein 11 from Homo sapiens (Human).